The sequence spans 250 residues: Copper homeostasis protein cutC homolog (250 aa).

It belongs to the CutC family.

Involved in copper homeostasis. Affects body morphology and length, egg laying and brood size. The polypeptide is Copper homeostasis protein cutC homolog (cutc-1) (Caenorhabditis elegans).